The chain runs to 447 residues: Protein mab-21-like 4 (447 aa).

The polypeptide is Protein mab-21-like 4 (Homo sapiens (Human)).